The chain runs to 335 residues: MVEKIWFENHPLKYLLWPLLWPLSVLFGAISRSKRQQFQTGRKQAYQAPVPVVVVGNITAGGNGKTPVVVWLVEQLQHLGYKPGVVSRGYGAKAPQYPLVLNDDTPTQHCGDEPKLIHRRTGAPVAVDPVRANAVKALVELDVDIIITDDGLQHYALERDVELVIVDGNRRFGNECLIPLGPLREGVERLQEVDFIITNGGLAHQGEISMSLAPSKAINLKTKQQVDVSELKALVAFAGIGHPPRFFNTLESMHADVKVTKGFADHQDFDQKELEALALQGANVIMTEKDAVKCSDYAQDNWWYLPVSAQLEPKDAERILNRIKEVKATYGSPSA.

ATP is bound at residue 59–66 (TAGGNGKT).

It belongs to the LpxK family.

It carries out the reaction a lipid A disaccharide + ATP = a lipid IVA + ADP + H(+). The protein operates within glycolipid biosynthesis; lipid IV(A) biosynthesis; lipid IV(A) from (3R)-3-hydroxytetradecanoyl-[acyl-carrier-protein] and UDP-N-acetyl-alpha-D-glucosamine: step 6/6. Functionally, transfers the gamma-phosphate of ATP to the 4'-position of a tetraacyldisaccharide 1-phosphate intermediate (termed DS-1-P) to form tetraacyldisaccharide 1,4'-bis-phosphate (lipid IVA). This is Tetraacyldisaccharide 4'-kinase from Vibrio parahaemolyticus serotype O3:K6 (strain RIMD 2210633).